The sequence spans 139 residues: Acidic phospholipase A2 5 (139 aa).

An N-terminal signal peptide occupies residues 1–16; it reads MRTLWIVAVWLMGVEG. 7 cysteine pairs are disulfide-bonded: cysteine 42–cysteine 131, cysteine 44–cysteine 60, cysteine 59–cysteine 111, cysteine 65–cysteine 139, cysteine 66–cysteine 104, cysteine 73–cysteine 97, and cysteine 91–cysteine 102. Ca(2+) contacts are provided by tyrosine 43, glycine 45, and glycine 47. The active site involves histidine 63. Aspartate 64 serves as a coordination point for Ca(2+). The active site involves aspartate 105.

This sequence belongs to the phospholipase A2 family. Group II subfamily. D49 sub-subfamily. Ca(2+) is required as a cofactor. As to expression, expressed by the venom gland.

Its subcellular location is the secreted. The catalysed reaction is a 1,2-diacyl-sn-glycero-3-phosphocholine + H2O = a 1-acyl-sn-glycero-3-phosphocholine + a fatty acid + H(+). Functionally, PLA2 catalyzes the calcium-dependent hydrolysis of the 2-acyl groups in 3-sn-phosphoglycerides. The polypeptide is Acidic phospholipase A2 5 (Echis pyramidum leakeyi (Leakey's carpet viper)).